The primary structure comprises 188 residues: MPKRKKQNQHQPPTQQQPPLPEREETGDEEDGSPIGPPSLLGPPPMANGKPGDPKSALHRGPPGSRGPLIPPLLSLPPPPWGRGPIRRGLGPRSSPYGRGWWGVNAEPPFPGPGHGGPTRGSFHKEQRNPRRLKSWSLIKNTCPPKDDPQVMEDKSDRPVCRHFAKKGHCRYEDLCAFYHPGVNGPPL.

Positions 1-157 (MPKRKKQNQH…DPQVMEDKSD (157 aa)) are disordered. Pro residues-rich tracts occupy residues 35-46 (IGPPSLLGPPPM) and 69-82 (LIPPLLSLPPPPWG). Residues 83 to 96 (RGPIRRGLGPRSSP) are compositionally biased toward low complexity. Residues 145–157 (PKDDPQVMEDKSD) show a composition bias toward basic and acidic residues. The C3H1-type zinc-finger motif lies at 155–183 (KSDRPVCRHFAKKGHCRYEDLCAFYHPGV).

The protein is Proline-rich protein 3 (PRR3) of Pan troglodytes (Chimpanzee).